The chain runs to 176 residues: Urease accessory protein UreE (176 aa).

The interval 147–176 (AGAYQQGGGHSHGHAHSHSHEKPHSHTHNH) is disordered.

It belongs to the UreE family.

Its subcellular location is the cytoplasm. Involved in urease metallocenter assembly. Binds nickel. Probably functions as a nickel donor during metallocenter assembly. This is Urease accessory protein UreE from Alcanivorax borkumensis (strain ATCC 700651 / DSM 11573 / NCIMB 13689 / SK2).